We begin with the raw amino-acid sequence, 259 residues long: Malonyl-[acyl-carrier protein] O-methyltransferase (259 aa).

Belongs to the methyltransferase superfamily.

The enzyme catalyses malonyl-[ACP] + S-adenosyl-L-methionine = malonyl-[ACP] methyl ester + S-adenosyl-L-homocysteine. It functions in the pathway cofactor biosynthesis; biotin biosynthesis. Converts the free carboxyl group of a malonyl-thioester to its methyl ester by transfer of a methyl group from S-adenosyl-L-methionine (SAM). It allows to synthesize pimeloyl-ACP via the fatty acid synthetic pathway. The protein is Malonyl-[acyl-carrier protein] O-methyltransferase of Anoxybacillus flavithermus (strain DSM 21510 / WK1).